The following is a 156-amino-acid chain: Succinate dehydrogenase [ubiquinone] cytochrome b small subunit 1, mitochondrial (156 aa).

Residues 1-25 constitute a mitochondrion transit peptide; sequence MLSAVRRAIPLSARILRTSLIQRCA. Over 26 to 59 the chain is Mitochondrial matrix; the sequence is GATSAAVTGAAPPQFDPIAAEKGFKPLHSHGTLF. Residues 60 to 78 form a helical membrane-spanning segment; sequence KIERYFAAAMVPLIPAAYF. Topologically, residues 79 to 83 are mitochondrial intermembrane; that stretch reads IHGRE. A helical membrane pass occupies residues 84–104; that stretch reads MDLCLALALTLHVHWGVWGVV. Heme b is bound at residue H95. Topologically, residues 105 to 119 are mitochondrial matrix; the sequence is NDYGRPFVLGDTLAA. Residue Y107 participates in a rhodoquinol binding. Residues 120-141 traverse the membrane as a helical segment; the sequence is AVRVGAYIFTACLLAGLLYFNE. Residues 142–156 lie on the Mitochondrial intermembrane side of the membrane; sequence HDVGLTRAFEMVWEL.

It belongs to the CybS family. In terms of assembly, component of the mitochondrial electron transport chain complex II composed of four subunits: a flavoprotein (Fp), an iron-sulfur protein (Ip), and a large cytochrome b (CybL) subunit and a small cytochrome b (CybS) subunit. There are 2 developmental stage-specific forms of complex II which have the Ip and CybL subunits in common. Complex II from the free-living larvae (aerobic environment) acts as a succinate dehydrogenase and is composed of the common subunit Ip and CybL and the stage specific subunits FpL and CybSL. Complex II from parasitic larvae and adults (anaerobic environment) acts as a fumarate reductase and is composed of the common subunit Ip and CybL and the stage specific subunits FpA and CybSA. The cofactor is heme b. As to expression, expressed in adult muscles (at protein level).

The protein resides in the mitochondrion inner membrane. Functionally, membrane-bound small subunit (CybS) of the mitochondrial electron transport chain complex II, which together with the membrane-bound large subunit (CybL), anchor the catalytic subunits to the inner mitochondria membrane. During the parasitic larvae and adult stages, which occur in an anaerobic environment, complex II acts as a fumarate reductase by transferring electrons from rhodoquinol to fumarate. In Ascaris suum (Pig roundworm), this protein is Succinate dehydrogenase [ubiquinone] cytochrome b small subunit 1, mitochondrial.